The chain runs to 166 residues: Ribonuclease P protein component (166 aa).

Belongs to the RnpA family. As to quaternary structure, consists of a catalytic RNA component (M1 or rnpB) and a protein subunit.

The catalysed reaction is Endonucleolytic cleavage of RNA, removing 5'-extranucleotides from tRNA precursor.. In terms of biological role, RNaseP catalyzes the removal of the 5'-leader sequence from pre-tRNA to produce the mature 5'-terminus. It can also cleave other RNA substrates such as 4.5S RNA. The protein component plays an auxiliary but essential role in vivo by binding to the 5'-leader sequence and broadening the substrate specificity of the ribozyme. The protein is Ribonuclease P protein component of Helicobacter pylori (strain HPAG1).